The sequence spans 856 residues: TPR repeat-containing protein TP_0123 (856 aa).

3 TPR repeats span residues 107–140 (YAAV…VADD), 523–556 (YRTF…AEQL), and 603–636 (TVSL…ALQY).

This chain is TPR repeat-containing protein TP_0123, found in Treponema pallidum (strain Nichols).